The following is a 605-amino-acid chain: Elongation factor 4 (605 aa).

One can recognise a tr-type G domain in the interval 4–186 (SSVRNFCIIA…AIVNKVPAPK (183 aa)). GTP contacts are provided by residues 16-21 (DHGKST) and 133-136 (NKID).

This sequence belongs to the TRAFAC class translation factor GTPase superfamily. Classic translation factor GTPase family. LepA subfamily.

The protein localises to the cell membrane. It catalyses the reaction GTP + H2O = GDP + phosphate + H(+). In terms of biological role, required for accurate and efficient protein synthesis under certain stress conditions. May act as a fidelity factor of the translation reaction, by catalyzing a one-codon backward translocation of tRNAs on improperly translocated ribosomes. Back-translocation proceeds from a post-translocation (POST) complex to a pre-translocation (PRE) complex, thus giving elongation factor G a second chance to translocate the tRNAs correctly. Binds to ribosomes in a GTP-dependent manner. This Dehalococcoides mccartyi (strain ATCC BAA-2100 / JCM 16839 / KCTC 5957 / BAV1) protein is Elongation factor 4.